The primary structure comprises 172 residues: Zinc finger protein 580 (172 aa).

Positions 1–93 (MLLLPPRPPH…GEPGPRKGYS (93 aa)) are disordered. Positions 19-30 (MDPPPPKAPPFP) are enriched in pro residues. K31 is covalently cross-linked (Glycyl lysine isopeptide (Lys-Gly) (interchain with G-Cter in SUMO2)). Over residues 31–44 (KAEGPSSTPSSAAG) the composition is skewed to low complexity. Residues 75–86 (GPPQREAPPGEP) are compositionally biased toward pro residues. The C2H2-type 1 zinc finger occupies 92 to 114 (YSCPECARVFASPLRLQSHRVSH). A Glycyl lysine isopeptide (Lys-Gly) (interchain with G-Cter in SUMO2) cross-link involves residue K118. 2 C2H2-type zinc fingers span residues 120–142 (FTCGACGKAFKRSSHLSRHRATH) and 150–172 (HTCPLCPRRFQDAAELAQHVRLH).

In terms of assembly, interacts with SMAD2. Expressed in endothelial cells.

Its subcellular location is the nucleus. Its function is as follows. Involved in the regulation of endothelial cell proliferation and migration. Mediates H(2)O(2)-induced leukocyte chemotaxis by elevating interleukin-8 production and may play a role in inflammation. May be involved in transcriptional regulation. This chain is Zinc finger protein 580 (ZNF580), found in Homo sapiens (Human).